Reading from the N-terminus, the 329-residue chain is MSGSVTEFLKPRLVEIDNVSPTRAKVTLEPLERGFGHTLGNALRRILLSSMPGCAVTEVEIDGVLHEYSTKEGVQEDVIEILLNLKGLAVRLEGKTEATLTLVKSGAGPVLAGDIQHDGDVEIVNPSHVLCTLTGEAELSMRIKVEMGRGYVPASTRRSSEEDDRPIGRLLVDASFSPVSRISYNVESARVEQRTDLDKLIIDMETNGTIDPEEAIRRSATILAEQLDAFVELRDMSEPVEKEEKPEFDPILLRPVDDLELTVRSANCLKAEAIQYIGDLVQRTEVELLKTPNLGKKSLTEIKDVLASRGLSLGMRLENWPPESIAEKD.

The segment at 1-234 (MSGSVTEFLK…EQLDAFVELR (234 aa)) is alpha N-terminal domain (alpha-NTD). The tract at residues 248 to 329 (FDPILLRPVD…WPPESIAEKD (82 aa)) is alpha C-terminal domain (alpha-CTD).

This sequence belongs to the RNA polymerase alpha chain family. In terms of assembly, homodimer. The RNAP catalytic core consists of 2 alpha, 1 beta, 1 beta' and 1 omega subunit. When a sigma factor is associated with the core the holoenzyme is formed, which can initiate transcription.

The catalysed reaction is RNA(n) + a ribonucleoside 5'-triphosphate = RNA(n+1) + diphosphate. Its function is as follows. DNA-dependent RNA polymerase catalyzes the transcription of DNA into RNA using the four ribonucleoside triphosphates as substrates. The protein is DNA-directed RNA polymerase subunit alpha of Pseudoalteromonas atlantica (strain T6c / ATCC BAA-1087).